The sequence spans 656 residues: MFSFRNQQVLTFVSSLSTFVTIILNHLKKWWSDVTLRTRLMAMTTLMVSLLMSSLTFWTLTSIQQETRLIDNRFGKDLSLLLAVNITPILEGDNYLQLQQFIEHFYLSTSSIRYILVFNADGQIYYSIPFSSETAINFFSLSEYNCFRNENHYFSNTPIVNTNNRLQGEVIDIIIPLSKEKKLLGILNIGINSNPTLTTSSQLTRDVSVAVFISIWLMVILGAAFNAFTITRPIRELLTGVKNIASGDFYQRIDLPFGGELGALIFNFNEMAERLEKYEQQNVEKLTSEKAKLETLVSTIADGAILLDKDLRVILVNRTAIENFGWEGKNIAGSIIVDYLPEDINQQLFPILNDIIRKNFLEQSICETQEICIKLQKNYKKTFRVLLTTVLDHKYSILKGIAMTIQDRTQEVELNEIKNQFISNVSHELRTPLFNIRSFLETLYEYHDSLDDSQKLEFLAIANKETGRLTRLVNDVLDLSRLESDQEYTLQPTDLVSAVEQTIRTYQLSAKDKRIDLHIDIEQNLQCVLGNYNLILQILANLVVNSLKFTHPNGIIILRAYTVDDLKTETEVQHFNSQKVRVEICDNGIGISRKNQERIFARFLRIENYVHTLEGTGLGLSIVKNIIQKHNSEIHLYSELKNGSCFFFDLMIAKDE.

3 helical membrane passes run 7-27, 40-60, and 210-230; these read QQVL…LNHL, LMAM…FWTL, and AVFI…AFTI. Residues 231-280 form the HAMP domain; that stretch reads TRPIRELLTGVKNIASGDFYQRIDLPFGGELGALIFNFNEMAERLEKYEQ. The 71-residue stretch at 289–359 folds into the PAS domain; that stretch reads EKAKLETLVS…PILNDIIRKN (71 aa). Residues 424 to 654 form the Histidine kinase domain; it reads NVSHELRTPL…CFFFDLMIAK (231 aa). His-427 carries the phosphohistidine; by autocatalysis modification.

The protein resides in the plastid. Its subcellular location is the chloroplast membrane. The catalysed reaction is ATP + protein L-histidine = ADP + protein N-phospho-L-histidine.. This is an uncharacterized protein from Porphyra purpurea (Red seaweed).